Here is a 414-residue protein sequence, read N- to C-terminus: MFSKTLTIADFDPVLWDAMRKEARRQEDHVELIASENYASPMVMAAQGSVLTNKYAEGYPGKRYYGGCEYVDIAEQLAMDRALELFGAEHANVQAHSGSQANQAVYLSVLQPGDKIMGMSLAHGGHLTHGAKVNVSGKLFQVAAYGVRAEDGRIDYDAMAEQAERERPKMIVAGASAYSRVIDFARIGEIARSIGAYLLVDMAHIAGLVATGLHPSPVPHADFVTTTTHKTLRGPRGGLILCREQYAKKVNSLIFPGLQGGPLMHVIAAKAVAFREALQPEFKSYQQQVIHNAQTLSKVLAGRGYGAVSGGTDNHLFLLNLGEKVTGKEAEEALGQANITVNKNAVPFDIRPPAVTSGIRIGTPAATTRGFGEAEMHRLGNGIADVLDASSDAAVIERVRADMKALCHQFPVYG.

(6S)-5,6,7,8-tetrahydrofolate-binding positions include leucine 121 and 125–127; that span reads GHL. An N6-(pyridoxal phosphate)lysine modification is found at lysine 230.

It belongs to the SHMT family. Homodimer. It depends on pyridoxal 5'-phosphate as a cofactor.

Its subcellular location is the cytoplasm. The catalysed reaction is (6R)-5,10-methylene-5,6,7,8-tetrahydrofolate + glycine + H2O = (6S)-5,6,7,8-tetrahydrofolate + L-serine. It participates in one-carbon metabolism; tetrahydrofolate interconversion. The protein operates within amino-acid biosynthesis; glycine biosynthesis; glycine from L-serine: step 1/1. Its function is as follows. Catalyzes the reversible interconversion of serine and glycine with tetrahydrofolate (THF) serving as the one-carbon carrier. This reaction serves as the major source of one-carbon groups required for the biosynthesis of purines, thymidylate, methionine, and other important biomolecules. Also exhibits THF-independent aldolase activity toward beta-hydroxyamino acids, producing glycine and aldehydes, via a retro-aldol mechanism. This chain is Serine hydroxymethyltransferase, found in Acidithiobacillus ferrooxidans (strain ATCC 23270 / DSM 14882 / CIP 104768 / NCIMB 8455) (Ferrobacillus ferrooxidans (strain ATCC 23270)).